Consider the following 275-residue polypeptide: Glutamate racemase (275 aa).

Residues 12–13 (DS) and 44–45 (YG) contribute to the substrate site. The Proton donor/acceptor role is filled by Cys-75. A substrate-binding site is contributed by 76–77 (NT). The active-site Proton donor/acceptor is Cys-185. 186–187 (TH) contributes to the substrate binding site.

Belongs to the aspartate/glutamate racemases family.

It carries out the reaction L-glutamate = D-glutamate. It participates in cell wall biogenesis; peptidoglycan biosynthesis. Functionally, provides the (R)-glutamate required for cell wall biosynthesis. The polypeptide is Glutamate racemase (Mycolicibacterium paratuberculosis (strain ATCC BAA-968 / K-10) (Mycobacterium paratuberculosis)).